Here is a 92-residue protein sequence, read N- to C-terminus: UPF0223 protein SPCG_1392 (92 aa).

It belongs to the UPF0223 family.

The polypeptide is UPF0223 protein SPCG_1392 (Streptococcus pneumoniae (strain CGSP14)).